The sequence spans 343 residues: C5a anaphylatoxin chemotactic receptor 2 (343 aa).

Residues 1–44 (MLNDTTSKDYEYEYDQEQYSDLLNVPVDCPAGNCFSNDAYLIVL) lie on the Extracellular side of the membrane. N3 is a glycosylation site (N-linked (GlcNAc...) asparagine). The chain crosses the membrane as a helical span at residues 45–67 (LGLYSVIFLVGVPGNTLLAWVTW). At 68 to 78 (KESRHRLGASW) the chain is on the cytoplasmic side. The chain crosses the membrane as a helical span at residues 79 to 101 (FLHLTMADLLCCVSLPFLAVPIA). The Extracellular segment spans residues 102-120 (QKGHWPYGTAGCWLLSSIT). An intrachain disulfide couples C113 to C192. Residues 121 to 143 (VLSMYASVLLLTGLSGDLFLLAF) traverse the membrane as a helical segment. At 144 to 155 (RPSWKNADQRTC) the chain is on the cytoplasmic side. A helical membrane pass occupies residues 156-178 (GVRVVQVSSWMLALLLTVPGAVY). The Extracellular segment spans residues 179–208 (RKLLQEHYPPRLVCGTNYGGSVTAEVTITT). Residues 209-231 (VRFLFGFLVPLVFMASCHGILQR) traverse the membrane as a helical segment. Residues 232–243 (QMARRHWPLGTA) are Cytoplasmic-facing. The chain crosses the membrane as a helical span at residues 244 to 266 (VVVGFFICWTPFHLLRVIIAVAS). Topologically, residues 267–280 (SHSPLLAWALEAEP) are extracellular. The helical transmembrane segment at 281 to 300 (LVTGLALAHSALNPIMFLYF) threads the bilayer. Topologically, residues 301-343 (GRKQLCKSLQAACHWALRDLQDEEESAVTKVSTSQEMVSEMPV) are cytoplasmic. The residue at position 326 (S326) is a Phosphoserine.

It belongs to the G-protein coupled receptor 1 family. Interacts with C3 (the anaphylatoxin peptide C3a and the adipogenic hormone ASP); the interaction occurs with higher affinity for ASP, enhancing the phosphorylation and activation of GPR77, recruitment of ARRB2 to the cell surface and endocytosis of GRP77.

Its subcellular location is the cell membrane. Receptor for the chemotactic and inflammatory C3a, C4a and C5a anaphylatoxin peptides and also for their dearginated forms ASP/C3adesArg, C4adesArg and C5adesArg respectively. Couples weakly to G(i)-mediated signaling pathways. The chain is C5a anaphylatoxin chemotactic receptor 2 (C5ar2) from Rattus norvegicus (Rat).